Consider the following 143-residue polypeptide: Nucleoside diphosphate kinase (143 aa).

Residues Lys11, Phe59, Arg87, Thr93, Arg104, and Asn114 each contribute to the ATP site. His117 (pros-phosphohistidine intermediate) is an active-site residue.

This sequence belongs to the NDK family. In terms of assembly, homotetramer. Mg(2+) is required as a cofactor.

It localises to the cytoplasm. It carries out the reaction a 2'-deoxyribonucleoside 5'-diphosphate + ATP = a 2'-deoxyribonucleoside 5'-triphosphate + ADP. The enzyme catalyses a ribonucleoside 5'-diphosphate + ATP = a ribonucleoside 5'-triphosphate + ADP. In terms of biological role, major role in the synthesis of nucleoside triphosphates other than ATP. The ATP gamma phosphate is transferred to the NDP beta phosphate via a ping-pong mechanism, using a phosphorylated active-site intermediate. This is Nucleoside diphosphate kinase from Shewanella denitrificans (strain OS217 / ATCC BAA-1090 / DSM 15013).